Reading from the N-terminus, the 235-residue chain is UPF0758 protein Swol_1642 (235 aa).

Positions 109-235 constitute an MPN domain; that stretch reads IIKSPEDVQE…YCSLKARGLI (127 aa). The Zn(2+) site is built by His-184, His-186, and Asp-197. The JAMM motif signature appears at 184–197; it reads HNHPSGDPTPSQED.

This sequence belongs to the UPF0758 family.

The sequence is that of UPF0758 protein Swol_1642 from Syntrophomonas wolfei subsp. wolfei (strain DSM 2245B / Goettingen).